The following is a 97-amino-acid chain: Small nuclear ribonucleoprotein Sm D3 (97 aa).

The region spanning 3–75 (LCIKLLHETQ…IRFLIVPDML (73 aa)) is the Sm domain.

Belongs to the snRNP core protein family. As to quaternary structure, belongs to the 40S cdc5-associated complex (or cwf complex), a spliceosome sub-complex reminiscent of a late-stage spliceosome composed of the U2, U5 and U6 snRNAs and at least brr2, cdc5, cwf2/prp3, cwf3/syf1, cwf4/syf3, cwf5/ecm2, spp42/cwf6, cwf7/spf27, cwf8, cwf9, cwf10, cwf11, cwf12, prp45/cwf13, cwf14, cwf15, cwf16, cwf17, cwf18, cwf19, cwf20, cwf21, cwf22, cwf23, cwf24, cwf25, cwf26, cyp7/cwf27, cwf28, cwf29/ist3, lea1, msl1, prp5/cwf1, prp10, prp12/sap130, prp17, prp22, sap61, sap62, sap114, sap145, slu7, smb1, smd1, smd3, smf1, smg1 and syf2. Interacts with saf5; the interaction is direct.

It localises to the nucleus. Its subcellular location is the cytoplasm. The protein resides in the cytosol. In terms of biological role, plays a role in pre-mRNA splicing as a core component of the spliceosomal U1, U2, U4 and U5 small nuclear ribonucleoproteins (snRNPs), the building blocks of the spliceosome. This Schizosaccharomyces pombe (strain 972 / ATCC 24843) (Fission yeast) protein is Small nuclear ribonucleoprotein Sm D3 (smd3).